Reading from the N-terminus, the 122-residue chain is Ubiquitin-related modifier 1 (122 aa).

A compositionally biased stretch (polar residues) spans 33–48 (PSTVPADNNTSVTTKD). Residues 33–52 (PSTVPADNNTSVTTKDAASP) are disordered. 1-thioglycine is present on G122. Residue G122 forms a Glycyl lysine isopeptide (Gly-Lys) (interchain with K-? in acceptor proteins) linkage.

Belongs to the URM1 family. C-terminal thiocarboxylation occurs in 2 steps, it is first acyl-adenylated (-COAMP) via the hesA/moeB/thiF part of UBA4, then thiocarboxylated (-COSH) via the rhodanese domain of UBA4.

Its subcellular location is the cytoplasm. It participates in tRNA modification; 5-methoxycarbonylmethyl-2-thiouridine-tRNA biosynthesis. Acts as a sulfur carrier required for 2-thiolation of mcm(5)S(2)U at tRNA wobble positions of cytosolic tRNA(Lys), tRNA(Glu) and tRNA(Gln). Serves as sulfur donor in tRNA 2-thiolation reaction by being thiocarboxylated (-COSH) at its C-terminus by the MOCS3 homolog UBA4. The sulfur is then transferred to tRNA to form 2-thiolation of mcm(5)S(2)U. Prior mcm(5) tRNA modification by the elongator complex is required for 2-thiolation. Also acts as a ubiquitin-like protein (UBL) that is covalently conjugated via an isopeptide bond to lysine residues of target proteins such as AHP1. The thiocarboxylated form serves as substrate for conjugation and oxidative stress specifically induces the formation of UBL-protein conjugates. The chain is Ubiquitin-related modifier 1 from Laccaria bicolor (strain S238N-H82 / ATCC MYA-4686) (Bicoloured deceiver).